A 312-amino-acid polypeptide reads, in one-letter code: Glyceraldehyde-3-phosphate dehydrogenase, cytosolic (312 aa).

NAD(+) contacts are provided by residues 5-6 and D27; that span reads RI. Residues 144–146, T175, 204–205, and R227 contribute to the D-glyceraldehyde 3-phosphate site; these read SCT and TG. C145 functions as the Nucleophile in the catalytic mechanism. N309 provides a ligand contact to NAD(+).

Belongs to the glyceraldehyde-3-phosphate dehydrogenase family. In terms of assembly, homotetramer.

Its subcellular location is the cytoplasm. The enzyme catalyses D-glyceraldehyde 3-phosphate + phosphate + NAD(+) = (2R)-3-phospho-glyceroyl phosphate + NADH + H(+). It functions in the pathway carbohydrate degradation; glycolysis; pyruvate from D-glyceraldehyde 3-phosphate: step 1/5. Its function is as follows. Key enzyme in glycolysis that catalyzes the first step of the pathway by converting D-glyceraldehyde 3-phosphate (G3P) into 3-phospho-D-glyceroyl phosphate. Essential for the maintenance of cellular ATP levels and carbohydrate metabolism. The polypeptide is Glyceraldehyde-3-phosphate dehydrogenase, cytosolic (GapC) (Scenedesmus vacuolatus (Green alga)).